The primary structure comprises 848 residues: Phosphatidate phosphatase LPIN3 (848 aa).

The N-LIP stretch occupies residues 1–108; sequence MNYVGQLAET…VPPRLCTSPI (108 aa). 3 disordered regions span residues 97–233, 271–298, and 314–373; these read EDVP…SPLR, PEEP…PGVR, and AVDS…NQHL. The Nuclear localization signal motif lies at 135 to 144; that stretch reads GRRKRRRRRK. Residues 135–146 show a composition bias toward basic residues; the sequence is GRRKRRRRRKPR. Over residues 151–164 the composition is skewed to acidic residues; the sequence is DAVDSSSEELEAGA. Serine 155 and serine 156 each carry phosphoserine. The span at 165 to 191 shows a compositional bias: low complexity; it reads ESELTLLEKPTPESPSAQEAEEPSSQP. A Phosphoserine modification is found at serine 218. Residues 271–282 are compositionally biased toward low complexity; it reads PEEPSPSSSPSE. Residues 342–358 show a composition bias toward polar residues; it reads KSWSWTTPESHTPSGHP. Phosphoserine is present on serine 460. Over residues 536 to 556 the composition is skewed to basic and acidic residues; it reads EEHSSQREKAATRKQQGEKTE. Residues 536-568 are disordered; it reads EEHSSQREKAATRKQQGEKTEVLSSDDDVPDSP. The tract at residues 587–789 is C-LIP; the sequence is YKKSLRLSSD…RIFTVNPRGE (203 aa). The short motif at 641-645 is the DXDXT motif element; sequence DIDGT. Positions 652-656 match the LXXIL motif motif; it reads LGHIL.

Belongs to the lipin family. Mg(2+) is required as a cofactor. Significant expression in intestine and other regions of the gastrointestinal tract.

The protein localises to the nucleus. The enzyme catalyses a 1,2-diacyl-sn-glycero-3-phosphate + H2O = a 1,2-diacyl-sn-glycerol + phosphate. Inhibited by N-ethylmaleimide. In terms of biological role, magnesium-dependent phosphatidate phosphatase enzyme which catalyzes the conversion of phosphatidic acid to diacylglycerol during triglyceride, phosphatidylcholine and phosphatidylethanolamine biosynthesis therefore regulates fatty acid metabolism. The chain is Phosphatidate phosphatase LPIN3 from Mus musculus (Mouse).